Consider the following 232-residue polypeptide: MGQKVNPIGLRLGINRNWESRWFPAKERTADFIAEDYKIRKFLKKELFYAGVSNIIIERTAKKLRINIITARPGIIIGKKGADIEKLKTTLVKMLGKDVAINIKEEKRPQASGQLAAENVATQLERRVAFRRAMKKVIQGALKSGAKGIKISVSGRLGGAEMARTEWYLEGRVPLHTLRAKIDYGFAEAQTTYGIIGIKVWIFKGEVLAKGIQPEPAEEKKGGRRPSRKRGE.

A KH type-2 domain is found at isoleucine 39 to lysine 107. A disordered region spans residues glutamine 213–glutamate 232. Positions glycine 222–glutamate 232 are enriched in basic residues.

This sequence belongs to the universal ribosomal protein uS3 family. Part of the 30S ribosomal subunit. Forms a tight complex with proteins S10 and S14.

Its function is as follows. Binds the lower part of the 30S subunit head. Binds mRNA in the 70S ribosome, positioning it for translation. The sequence is that of Small ribosomal subunit protein uS3 from Sulfurovum sp. (strain NBC37-1).